The primary structure comprises 101 residues: Large ribosomal subunit protein uL23 (101 aa).

This sequence belongs to the universal ribosomal protein uL23 family. As to quaternary structure, part of the 50S ribosomal subunit. Contacts protein L29, and trigger factor when it is bound to the ribosome.

Its function is as follows. One of the early assembly proteins it binds 23S rRNA. One of the proteins that surrounds the polypeptide exit tunnel on the outside of the ribosome. Forms the main docking site for trigger factor binding to the ribosome. In Trichodesmium erythraeum (strain IMS101), this protein is Large ribosomal subunit protein uL23.